The following is a 560-amino-acid chain: Nuclear hormone receptor family member nhr-8 (560 aa).

Positions 1–21 are disordered; it reads MPSSSPSMDESRRSAVPPKEP. The nuclear receptor DNA-binding region spans 23–98; the sequence is GRICTVCSDR…VGMNSEWLND (76 aa). NR C4-type zinc fingers lie at residues 26 to 46 and 62 to 86; these read CTVC…CESC and CPFS…LNKC. The NR LBD domain maps to 336–560; sequence DEITLLEELH…PLIRELCSFE (225 aa).

It belongs to the nuclear hormone receptor family.

The protein resides in the nucleus. In terms of biological role, orphan nuclear receptor. The sequence is that of Nuclear hormone receptor family member nhr-8 (nhr-8) from Caenorhabditis elegans.